Here is a 468-residue protein sequence, read N- to C-terminus: 6-phosphogluconate dehydrogenase, decarboxylating (468 aa).

Residues 10 to 15 (GMAVMG), 33 to 35 (NRS), 74 to 76 (VKA), and Asn-102 contribute to the NADP(+) site. Substrate is bound by residues Asn-102 and 128-130 (SGG). Lys-183 functions as the Proton acceptor in the catalytic mechanism. 186–187 (HN) serves as a coordination point for substrate. The active-site Proton donor is Glu-190. Residues Tyr-191, Lys-260, Arg-287, Arg-445, and His-451 each contribute to the substrate site.

Belongs to the 6-phosphogluconate dehydrogenase family. Homodimer.

It carries out the reaction 6-phospho-D-gluconate + NADP(+) = D-ribulose 5-phosphate + CO2 + NADPH. It functions in the pathway carbohydrate degradation; pentose phosphate pathway; D-ribulose 5-phosphate from D-glucose 6-phosphate (oxidative stage): step 3/3. Its function is as follows. Catalyzes the oxidative decarboxylation of 6-phosphogluconate to ribulose 5-phosphate and CO(2), with concomitant reduction of NADP to NADPH. This is 6-phosphogluconate dehydrogenase, decarboxylating (gnd) from Escherichia coli (strain K12).